Consider the following 79-residue polypeptide: Small ribosomal subunit protein bS18 (79 aa).

Belongs to the bacterial ribosomal protein bS18 family. Part of the 30S ribosomal subunit. Forms a tight heterodimer with protein bS6.

In terms of biological role, binds as a heterodimer with protein bS6 to the central domain of the 16S rRNA, where it helps stabilize the platform of the 30S subunit. This Afipia carboxidovorans (strain ATCC 49405 / DSM 1227 / KCTC 32145 / OM5) (Oligotropha carboxidovorans) protein is Small ribosomal subunit protein bS18.